A 395-amino-acid polypeptide reads, in one-letter code: Tryptophan synthase beta chain (395 aa).

Lys-86 bears the N6-(pyridoxal phosphate)lysine mark.

The protein belongs to the TrpB family. In terms of assembly, tetramer of two alpha and two beta chains. Pyridoxal 5'-phosphate serves as cofactor.

It carries out the reaction (1S,2R)-1-C-(indol-3-yl)glycerol 3-phosphate + L-serine = D-glyceraldehyde 3-phosphate + L-tryptophan + H2O. The protein operates within amino-acid biosynthesis; L-tryptophan biosynthesis; L-tryptophan from chorismate: step 5/5. The beta subunit is responsible for the synthesis of L-tryptophan from indole and L-serine. The sequence is that of Tryptophan synthase beta chain from Pseudoalteromonas atlantica (strain T6c / ATCC BAA-1087).